Consider the following 100-residue polypeptide: Large ribosomal subunit protein eL21 (100 aa).

The protein belongs to the eukaryotic ribosomal protein eL21 family.

In Pyrobaculum arsenaticum (strain DSM 13514 / JCM 11321 / PZ6), this protein is Large ribosomal subunit protein eL21.